The following is a 187-amino-acid chain: Ubiquinol-cytochrome c reductase iron-sulfur subunit (187 aa).

The helical transmembrane segment at 15 to 35 threads the bilayer; that stretch reads LYYATAGAGAVATGAAVWPLI. Residues 89 to 185 form the Rieske domain; sequence QLGQLVDTNA…AKFIDETTIQ (97 aa). Positions 129, 131, 149, and 152 each coordinate [2Fe-2S] cluster. Cysteine 134 and cysteine 151 are joined by a disulfide.

It belongs to the Rieske iron-sulfur protein family. In terms of assembly, the main subunits of complex b-c1 are: cytochrome b, cytochrome c1 and the Rieske protein. [2Fe-2S] cluster is required as a cofactor.

It localises to the cell membrane. The enzyme catalyses a quinol + 2 Fe(III)-[cytochrome c](out) = a quinone + 2 Fe(II)-[cytochrome c](out) + 2 H(+)(out). In terms of biological role, component of the ubiquinol-cytochrome c reductase complex (complex III or cytochrome b-c1 complex), which is a respiratory chain that generates an electrochemical potential coupled to ATP synthesis. This is Ubiquinol-cytochrome c reductase iron-sulfur subunit (petA) from Cereibacter sphaeroides (Rhodobacter sphaeroides).